The primary structure comprises 1663 residues: TPR repeat-containing protein DDB_G0287407 (1663 aa).

Disordered regions lie at residues 84-109 and 326-359; these read RKTQ…QKGQ and SEYS…NSNQ. Residues 89–105 show a composition bias toward low complexity; that stretch reads TSSNGSTSTTTTTTTTT. Residues 333-352 show a composition bias toward acidic residues; it reads DDGENDQSDDDDDNEDDDDF. TPR repeat units follow at residues 1110–1143, 1150–1183, 1192–1225, 1234–1269, 1278–1311, and 1320–1353; these read SDVW…YINN, AKVD…YTKE, AITL…CESK, ADIA…TESK, ARIL…YEAR, and SQIL…TKKI. 2 disordered regions span residues 1500–1528 and 1544–1571; these read VAQP…QQQR and QKVS…RQNT. A coiled-coil region spans residues 1516-1547; that stretch reads RTQQAIQQGQQQRQQVQQQQQQVQQQMSQKVS. Low complexity-rich tracts occupy residues 1518 to 1528 and 1544 to 1563; these read QQAIQQGQQQR and QKVS…QPSQ.

This is TPR repeat-containing protein DDB_G0287407 from Dictyostelium discoideum (Social amoeba).